A 215-amino-acid polypeptide reads, in one-letter code: Probable ribosome-binding factor A, chloroplastic (215 aa).

A chloroplast-targeting transit peptide spans Met1–Arg52. Basic and acidic residues predominate over residues Lys183 to Pro192. Residues Lys183–Asp210 are disordered. Acidic residues predominate over residues Asp194 to Asp210.

The protein belongs to the RbfA family.

The protein localises to the plastid. It is found in the chloroplast. The chain is Probable ribosome-binding factor A, chloroplastic from Arabidopsis thaliana (Mouse-ear cress).